A 373-amino-acid chain; its full sequence is L-threonine 3-dehydrogenase, mitochondrial (373 aa).

Residues 62 to 67, 88 to 90, 106 to 107, Tyr195, Lys199, and Ile225 each bind NAD(+); these read GGLGQL, DIR, and DI. Tyr195 serves as the catalytic Proton donor/acceptor.

Belongs to the NAD(P)-dependent epimerase/dehydratase family. Homodimer.

Its subcellular location is the mitochondrion. It carries out the reaction L-threonine + NAD(+) = (2S)-2-amino-3-oxobutanoate + NADH + H(+). It functions in the pathway amino-acid degradation; L-threonine degradation via oxydo-reductase pathway; glycine from L-threonine: step 1/2. In terms of biological role, catalyzes the NAD(+)-dependent oxidation of L-threonine to 2-amino-3-ketobutyrate, mediating L-threonine catabolism. This is L-threonine 3-dehydrogenase, mitochondrial from Sus scrofa (Pig).